The following is a 460-amino-acid chain: 3-isopropylmalate dehydratase large subunit (460 aa).

Cysteine 338, cysteine 398, and cysteine 401 together coordinate [4Fe-4S] cluster.

It belongs to the aconitase/IPM isomerase family. LeuC type 1 subfamily. In terms of assembly, heterodimer of LeuC and LeuD. [4Fe-4S] cluster is required as a cofactor.

The catalysed reaction is (2R,3S)-3-isopropylmalate = (2S)-2-isopropylmalate. It participates in amino-acid biosynthesis; L-leucine biosynthesis; L-leucine from 3-methyl-2-oxobutanoate: step 2/4. Functionally, catalyzes the isomerization between 2-isopropylmalate and 3-isopropylmalate, via the formation of 2-isopropylmaleate. The chain is 3-isopropylmalate dehydratase large subunit from Streptococcus thermophilus (strain ATCC BAA-491 / LMD-9).